We begin with the raw amino-acid sequence, 335 residues long: Serine/threonine-protein kinase crk1 (335 aa).

A Protein kinase domain is found at 11–292 (YVKERKVGEG…AQQALEHHYF (282 aa)). ATP is bound by residues 17-25 (VGEGTYAVV) and K40. D133 (proton acceptor) is an active-site residue. Residue S162 is modified to Phosphoserine. Residue S165 is modified to Phosphoserine; by CAK. S318 carries the post-translational modification Phosphoserine.

It belongs to the protein kinase superfamily. CMGC Ser/Thr protein kinase family. CDC2/CDKX subfamily. One of the nine subunits forming the core-TFIIH basal transcription factor. Interacts with mcs2 and tfb3.

The protein localises to the cytoplasm. It localises to the nucleus. It catalyses the reaction [DNA-directed RNA polymerase] + ATP = phospho-[DNA-directed RNA polymerase] + ADP + H(+). Its function is as follows. Protein kinase essential for cell proliferation, where it is required for completion of cytokinesis. Phosphorylates the C-terminal repeat domain (CTD) of RNA polymerase II. The chain is Serine/threonine-protein kinase crk1 (crk1) from Schizosaccharomyces pombe (strain 972 / ATCC 24843) (Fission yeast).